The primary structure comprises 402 residues: Argininosuccinate synthase (402 aa).

9-17 provides a ligand contact to ATP; it reads AYSGGLDTS. Tyrosine 87 contacts L-citrulline. Glycine 117 is a binding site for ATP. Threonine 119, asparagine 123, and aspartate 124 together coordinate L-aspartate. L-citrulline is bound at residue asparagine 123. Arginine 127, serine 176, serine 185, glutamate 261, and tyrosine 273 together coordinate L-citrulline.

The protein belongs to the argininosuccinate synthase family. Type 1 subfamily. In terms of assembly, homotetramer.

The protein resides in the cytoplasm. The catalysed reaction is L-citrulline + L-aspartate + ATP = 2-(N(omega)-L-arginino)succinate + AMP + diphosphate + H(+). It functions in the pathway amino-acid biosynthesis; L-arginine biosynthesis; L-arginine from L-ornithine and carbamoyl phosphate: step 2/3. In Chlorobium phaeobacteroides (strain BS1), this protein is Argininosuccinate synthase.